A 262-amino-acid polypeptide reads, in one-letter code: Sepiapterin reductase (262 aa).

Methionine 1 carries the N-acetylmethionine modification. Residues 15 to 21 and 43 to 44 contribute to the NADP(+) site; these read GASRGFG and RS. Serine 46 is modified (phosphoserine). NADP(+) is bound at residue 70 to 71; that stretch reads DL. Substrate is bound by residues 158 to 159 and tyrosine 171; that span reads SL. Lysine 175 provides a ligand contact to NADP(+). A Phosphoserine modification is found at serine 196. A substrate-binding site is contributed by glycine 200. Residue 202–207 participates in NADP(+) binding; the sequence is LDTDMQ. Serine 214 bears the Phosphoserine mark. Aspartate 258 serves as a coordination point for substrate.

This sequence belongs to the sepiapterin reductase family. In terms of assembly, homodimer.

The protein resides in the cytoplasm. The catalysed reaction is L-erythro-7,8-dihydrobiopterin + NADP(+) = L-sepiapterin + NADPH + H(+). The enzyme catalyses (6R)-L-erythro-5,6,7,8-tetrahydrobiopterin + 2 NADP(+) = 6-pyruvoyl-5,6,7,8-tetrahydropterin + 2 NADPH + 2 H(+). It catalyses the reaction (S)-benzoin + NADP(+) = benzil + NADPH + H(+). In terms of biological role, catalyzes the final one or two reductions in tetra-hydrobiopterin biosynthesis to form 5,6,7,8-tetrahydrobiopterin. The enzyme also catalyzes the reduction of benzil to (S)-benzoin. This chain is Sepiapterin reductase (SPR), found in Meriones unguiculatus (Mongolian jird).